Here is a 492-residue protein sequence, read N- to C-terminus: MGLLDPSQKEVLKFAVSCRILTLVLQALFNIIIPDHHADAFSPPRLAPSGSVDQLVEALLGGLSRWDAEHFLFIAEHGYLYEHNFAFFPGFPLALLMGTELLRPLQGLLSERSCLLVSVALLNSLFSVLAAVALHDLGCLVLHCPRQAFCAALLFCLSPANVFLAAGYSEALFAFLTFSAMGQLERGRGWASGLLFALAAGVRSNGLVSVGFLLHSQCRGFCSSLVVLDPLKGLVKLMASLCLSVLTVSLPFALFQYYAYTQFCFPGSAHAIPEPLLRLASDRGYRLAGDYEPPWCSRAPPLIYSYIQDVYWNVGLLRYYELRQVPNFLLATPVTVLVVWATWTYVTAHPWLCLTLGLQRTKDRESLEKPHPGFLSAKVFVYLVHAAALLAFGGLCMHVQVLTRLLGSSTPITYWFPAYLLQDREPLLRCVDTAPQKLLENSPPGQKAPRNCVMKLLYNWKTCSPVTKCILVYFLTYWLLGLIMHCNFLPWT.

At 1–13 the chain is on the cytoplasmic side; it reads MGLLDPSQKEVLK. The chain crosses the membrane as a helical span at residues 14-34; it reads FAVSCRILTLVLQALFNIIIP. Over 35 to 77 the chain is Lumenal; the sequence is DHHADAFSPPRLAPSGSVDQLVEALLGGLSRWDAEHFLFIAEH. A helical membrane pass occupies residues 78–98; the sequence is GYLYEHNFAFFPGFPLALLMG. The Cytoplasmic segment spans residues 99-113; sequence TELLRPLQGLLSERS. Residues 114-134 traverse the membrane as a helical segment; that stretch reads CLLVSVALLNSLFSVLAAVAL. Over 135–136 the chain is Lumenal; sequence HD. The helical transmembrane segment at 137–157 threads the bilayer; sequence LGCLVLHCPRQAFCAALLFCL. The Cytoplasmic portion of the chain corresponds to 158–161; it reads SPAN. A helical transmembrane segment spans residues 162-182; sequence VFLAAGYSEALFAFLTFSAMG. The Lumenal segment spans residues 183 to 192; that stretch reads QLERGRGWAS. The helical transmembrane segment at 193–213 threads the bilayer; the sequence is GLLFALAAGVRSNGLVSVGFL. Residues 214–234 are Cytoplasmic-facing; that stretch reads LHSQCRGFCSSLVVLDPLKGL. The helical transmembrane segment at 235–255 threads the bilayer; that stretch reads VKLMASLCLSVLTVSLPFALF. Residues 256–327 are Lumenal-facing; the sequence is QYYAYTQFCF…RYYELRQVPN (72 aa). Residues 328-348 form a helical membrane-spanning segment; it reads FLLATPVTVLVVWATWTYVTA. Topologically, residues 349-378 are cytoplasmic; it reads HPWLCLTLGLQRTKDRESLEKPHPGFLSAK. Residues 379–399 traverse the membrane as a helical segment; the sequence is VFVYLVHAAALLAFGGLCMHV. Over 400–468 the chain is Lumenal; that stretch reads QVLTRLLGSS…NWKTCSPVTK (69 aa). A helical transmembrane segment spans residues 469–489; sequence CILVYFLTYWLLGLIMHCNFL. The Cytoplasmic portion of the chain corresponds to 490-492; it reads PWT.

This sequence belongs to the PIGV family. In terms of processing, not N-glycosylated.

The protein resides in the endoplasmic reticulum membrane. The protein operates within glycolipid biosynthesis; glycosylphosphatidylinositol-anchor biosynthesis. In terms of biological role, alpha-1,6-mannosyltransferase that catalyzes the transfer of the second mannose, via an alpha-1,6 bond, from a dolichol-phosphate-mannose (Dol-P-Man) to the alpha-D-Man-(1-&gt;4)-alpha-D-GlcN-(1-&gt;6)-(1-radyl,2-acyl-sn-glycero-3-phospho)-2-acyl-inositol (also termed H2) intermediate to generate an alpha-D-Man-(1-&gt;6)-alpha-D-Man-(1-&gt;4)-alpha-D-GlcN-(1-&gt;6)-(1-radyl,2-acyl-sn-glycero-3-phospho)-2-acyl-inositol (also termed H3) and participates in the seventh step of the glycosylphosphatidylinositol-anchor biosynthesis. Also transfers the second mannose on a 2-PEtn-alpha-D-Man-(1-&gt;4)-alpha-D-GlcN-(1-&gt;6)-(1-radyl,2-acyl-sn-glycero-3-phospho)-2-acyl-inositol (also termed H5). This Rattus norvegicus (Rat) protein is GPI alpha-1,6-mannosyltransferase 2.